The sequence spans 592 residues: Vacuolin-B (592 aa).

Positions Met-1–Ser-30 are enriched in polar residues. A disordered region spans residues Met-1 to Asn-35. Residues Lys-480–Gln-534 are a coiled coil. The tract at residues Asp-491–Glu-555 is oligomerization domain.

Belongs to the vacuolin family. In terms of assembly, homotrimer.

Its subcellular location is the endosome membrane. It localises to the lysosome membrane. In terms of biological role, negative regulator of late steps of the endocytic pathway. The sequence is that of Vacuolin-B (vacB) from Dictyostelium discoideum (Social amoeba).